Reading from the N-terminus, the 696-residue chain is DNA ligase (696 aa).

NAD(+)-binding positions include 36 to 40, 85 to 86, and Glu123; these read DAEYD and SL. Lys125 serves as the catalytic N6-AMP-lysine intermediate. Positions 146, 181, 319, and 343 each coordinate NAD(+). Zn(2+) contacts are provided by Cys437, Cys440, Cys455, and Cys461. In terms of domain architecture, BRCT spans 618–696; that stretch reads PEGTSLAGKT…EDGLKALLGL (79 aa).

This sequence belongs to the NAD-dependent DNA ligase family. LigA subfamily. The cofactor is Mg(2+). Requires Mn(2+) as cofactor.

The enzyme catalyses NAD(+) + (deoxyribonucleotide)n-3'-hydroxyl + 5'-phospho-(deoxyribonucleotide)m = (deoxyribonucleotide)n+m + AMP + beta-nicotinamide D-nucleotide.. In terms of biological role, DNA ligase that catalyzes the formation of phosphodiester linkages between 5'-phosphoryl and 3'-hydroxyl groups in double-stranded DNA using NAD as a coenzyme and as the energy source for the reaction. It is essential for DNA replication and repair of damaged DNA. The protein is DNA ligase of Bordetella bronchiseptica (strain ATCC BAA-588 / NCTC 13252 / RB50) (Alcaligenes bronchisepticus).